Here is a 357-residue protein sequence, read N- to C-terminus: Acyl-CoA Delta12-desaturase (357 aa).

A run of 2 helical transmembrane segments spans residues 49 to 69 (VLWF…IFAS) and 72 to 92 (IYTT…ITAG). Fe cation-binding residues include H94, H99, H131, H134, and H135. A Histidine box-1 motif is present at residues 94–99 (HRLWAH). The short motif at 131–135 (HRVHH) is the Histidine box-2 element. The next 2 membrane-spanning stretches (helical) occupy residues 195 to 215 (LVPF…WGET) and 223 to 245 (STMF…AHMW). 4 residues coordinate Fe cation: H243, H272, H275, and H276. The Histidine box-3 motif lies at 272–276 (HNFHH).

It belongs to the fatty acid desaturase type 1 family. Fe(2+) is required as a cofactor.

The protein localises to the membrane. It catalyses the reaction (9Z)-octadecenoyl-CoA + 2 Fe(II)-[cytochrome b5] + O2 + 2 H(+) = (9Z,12Z)-octadecadienoyl-CoA + 2 Fe(III)-[cytochrome b5] + 2 H2O. It carries out the reaction (9Z)-hexadecenoyl-CoA + 2 Fe(II)-[cytochrome b5] + O2 + 2 H(+) = (9Z,12Z)-hexadecadienoyl-CoA + 2 Fe(III)-[cytochrome b5] + 2 H2O. The enzyme catalyses hexadecanoyl-CoA + 2 Fe(II)-[cytochrome b5] + O2 + 2 H(+) = (9Z)-hexadecenoyl-CoA + 2 Fe(III)-[cytochrome b5] + 2 H2O. Catalyzes the formation of a Delta12 double bond, acting on monounsaturated fatty acyl substrates like palmitoleoyl-CoA ((9Z)-hexadecenoyl-CoA) and oleoyl-CoA ((9Z)-octadecenoyl-CoA) with higher desaturation activity on (9Z)-octadecenoyl-CoA than (9Z)-hexadecenoyl-CoA. Requires preexisting cis double bond at the Delta9 position of fatty acyls to be able to insert the Delta12 double bond. Delta12-desaturation of (9Z)-octadecenoyl-CoA in insects produces (9Z,12Z)-octadecadienoyl-CoA (linoleoyl-CoA) which may be used to supply precursors of crucial mediators of immunity and reproduction and other essential functions. Can also catalyze Delta9-desaturation on saturated fatty acyl substrates like palmitoyl-CoA (hexadecanoyl-CoA) but with lower efficiency. This chain is Acyl-CoA Delta12-desaturase, found in Acheta domesticus (House cricket).